A 153-amino-acid polypeptide reads, in one-letter code: Cytochrome c oxidase subunit 5A, mitochondrial (153 aa).

Residues 1–20 (MLRNTFTRAGGLSRITSVRF) constitute a mitochondrion transit peptide. Topologically, residues 21-88 (AQTHALSNAA…EWGPRRPVLN (68 aa)) are mitochondrial matrix. The chain crosses the membrane as a helical span at residues 89 to 111 (KGDSSFIAKGVAAGLLFSVGLFA). Topologically, residues 112-153 (VVRMAGGQDAKTMNKEWQLKSDEYLKSKNANPWGGYSQVQSK) are mitochondrial intermembrane.

This sequence belongs to the cytochrome c oxidase IV family. In terms of assembly, component of the cytochrome c oxidase (complex IV, CIV), a multisubunit enzyme composed of 12 subunits. The complex is composed of a catalytic core of 3 subunits COX1, COX2 and COX3, encoded in the mitochondrial DNA, and 9 supernumerary subunits COX4, COX5A (or COX5B), COX6, COX7, COX8, COX9, COX12, COX13 and COX26, which are encoded in the nuclear genome. COX5A is the predominant subunit V during aerobic/normoxic growth, it gets replaced by COX5B under anaerobic/hypoxic conditions. The complex exists as a monomer or a dimer and forms supercomplexes (SCs) in the inner mitochondrial membrane with a dimer of ubiquinol-cytochrome c oxidoreductase (cytochrome b-c1 complex, complex III, CIII), resulting in 2 different assemblies (supercomplexes III(2)IV and III(2)IV(2)). COX5A interacts with COR1, CYT1 and QCR6 at the CIII-CIV interface.

The protein resides in the mitochondrion inner membrane. It functions in the pathway energy metabolism; oxidative phosphorylation. Functionally, component of the cytochrome c oxidase, the last enzyme in the mitochondrial electron transport chain which drives oxidative phosphorylation. The respiratory chain contains 3 multisubunit complexes succinate dehydrogenase (complex II, CII), ubiquinol-cytochrome c oxidoreductase (cytochrome b-c1 complex, complex III, CIII) and cytochrome c oxidase (complex IV, CIV), that cooperate to transfer electrons derived from NADH and succinate to molecular oxygen, creating an electrochemical gradient over the inner membrane that drives transmembrane transport and the ATP synthase. Cytochrome c oxidase is the component of the respiratory chain that catalyzes the reduction of oxygen to water. Electrons originating from reduced cytochrome c in the intermembrane space (IMS) are transferred via the dinuclear copper A center (CU(A)) of COX2 and heme A of COX1 to the active site in COX1, a binuclear center (BNC) formed by heme A3 and copper B (CU(B)). The BNC reduces molecular oxygen to 2 water molecules using 4 electrons from cytochrome c in the IMS and 4 protons from the mitochondrial matrix. The chain is Cytochrome c oxidase subunit 5A, mitochondrial (COX5A) from Saccharomyces cerevisiae (strain ATCC 204508 / S288c) (Baker's yeast).